The primary structure comprises 307 residues: Pseudouridine-5'-phosphate glycosidase (307 aa).

Glutamate 28 functions as the Proton donor in the catalytic mechanism. Substrate-binding residues include lysine 89 and valine 109. A Mn(2+)-binding site is contributed by aspartate 141. Substrate is bound at residue 143-145 (SAD). Lysine 162 acts as the Nucleophile in catalysis.

Belongs to the pseudouridine-5'-phosphate glycosidase family. As to quaternary structure, homotrimer. It depends on Mn(2+) as a cofactor.

The enzyme catalyses D-ribose 5-phosphate + uracil = psi-UMP + H2O. In terms of biological role, catalyzes the reversible cleavage of pseudouridine 5'-phosphate (PsiMP) to ribose 5-phosphate and uracil. Functions biologically in the cleavage direction, as part of a pseudouridine degradation pathway. The protein is Pseudouridine-5'-phosphate glycosidase of Staphylococcus aureus (strain MW2).